Here is a 70-residue protein sequence, read N- to C-terminus: Omega-conotoxin-like Bu1 (70 aa).

An N-terminal signal peptide occupies residues 1–22; it reads MKLTCVAIVAVLLLTACQLITA. Positions 23–45 are excised as a propeptide; the sequence is EDSRGTQLHRALRKTTKLSVSTR. 3 disulfide bridges follow: Cys46–Cys61, Cys53–Cys65, and Cys60–Cys70.

This sequence belongs to the conotoxin O1 superfamily. In terms of tissue distribution, expressed by the venom duct.

It is found in the secreted. Omega-conotoxins act at presynaptic membranes, they bind and block voltage-gated calcium channels (Cav). The polypeptide is Omega-conotoxin-like Bu1 (Conus bullatus (Bubble cone)).